A 355-amino-acid polypeptide reads, in one-letter code: S-adenosylmethionine:tRNA ribosyltransferase-isomerase (355 aa).

Belongs to the QueA family. In terms of assembly, monomer.

It localises to the cytoplasm. It carries out the reaction 7-aminomethyl-7-carbaguanosine(34) in tRNA + S-adenosyl-L-methionine = epoxyqueuosine(34) in tRNA + adenine + L-methionine + 2 H(+). Its pathway is tRNA modification; tRNA-queuosine biosynthesis. Functionally, transfers and isomerizes the ribose moiety from AdoMet to the 7-aminomethyl group of 7-deazaguanine (preQ1-tRNA) to give epoxyqueuosine (oQ-tRNA). This Burkholderia cenocepacia (strain ATCC BAA-245 / DSM 16553 / LMG 16656 / NCTC 13227 / J2315 / CF5610) (Burkholderia cepacia (strain J2315)) protein is S-adenosylmethionine:tRNA ribosyltransferase-isomerase.